A 370-amino-acid polypeptide reads, in one-letter code: UDP-N-acetylglucosamine--N-acetylmuramyl-(pentapeptide) pyrophosphoryl-undecaprenol N-acetylglucosamine transferase (370 aa).

UDP-N-acetyl-alpha-D-glucosamine-binding positions include 15–17, Asn126, Arg169, Ser197, and Gln299; that span reads TGG.

The protein belongs to the glycosyltransferase 28 family. MurG subfamily.

Its subcellular location is the cell inner membrane. The enzyme catalyses di-trans,octa-cis-undecaprenyl diphospho-N-acetyl-alpha-D-muramoyl-L-alanyl-D-glutamyl-meso-2,6-diaminopimeloyl-D-alanyl-D-alanine + UDP-N-acetyl-alpha-D-glucosamine = di-trans,octa-cis-undecaprenyl diphospho-[N-acetyl-alpha-D-glucosaminyl-(1-&gt;4)]-N-acetyl-alpha-D-muramoyl-L-alanyl-D-glutamyl-meso-2,6-diaminopimeloyl-D-alanyl-D-alanine + UDP + H(+). It participates in cell wall biogenesis; peptidoglycan biosynthesis. In terms of biological role, cell wall formation. Catalyzes the transfer of a GlcNAc subunit on undecaprenyl-pyrophosphoryl-MurNAc-pentapeptide (lipid intermediate I) to form undecaprenyl-pyrophosphoryl-MurNAc-(pentapeptide)GlcNAc (lipid intermediate II). The chain is UDP-N-acetylglucosamine--N-acetylmuramyl-(pentapeptide) pyrophosphoryl-undecaprenol N-acetylglucosamine transferase from Methylorubrum populi (strain ATCC BAA-705 / NCIMB 13946 / BJ001) (Methylobacterium populi).